Consider the following 152-residue polypeptide: Deoxyuridine 5'-triphosphate nucleotidohydrolase (152 aa).

Substrate-binding positions include 72 to 74, Asn85, and 89 to 91; these read RSG and TID.

Belongs to the dUTPase family. The cofactor is Mg(2+).

It carries out the reaction dUTP + H2O = dUMP + diphosphate + H(+). Its pathway is pyrimidine metabolism; dUMP biosynthesis; dUMP from dCTP (dUTP route): step 2/2. This enzyme is involved in nucleotide metabolism: it produces dUMP, the immediate precursor of thymidine nucleotides and it decreases the intracellular concentration of dUTP so that uracil cannot be incorporated into DNA. The polypeptide is Deoxyuridine 5'-triphosphate nucleotidohydrolase (Afipia carboxidovorans (strain ATCC 49405 / DSM 1227 / KCTC 32145 / OM5) (Oligotropha carboxidovorans)).